The sequence spans 119 residues: Large ribosomal subunit protein bL20 (119 aa).

This sequence belongs to the bacterial ribosomal protein bL20 family.

Binds directly to 23S ribosomal RNA and is necessary for the in vitro assembly process of the 50S ribosomal subunit. It is not involved in the protein synthesizing functions of that subunit. The sequence is that of Large ribosomal subunit protein bL20 from Dechloromonas aromatica (strain RCB).